Reading from the N-terminus, the 318-residue chain is NADH-ubiquinone oxidoreductase chain 1 (318 aa).

Transmembrane regions (helical) follow at residues 3–23, 69–89, 102–122, 146–166, 171–191, 222–242, 253–273, and 294–314; these read FMNL…LTLL, VLFI…WIPL, ILFM…SGWA, LAII…STLI, HIWL…STLA, LFFL…IILF, ELYT…FLWV, and LPLT…LAGI.

The protein belongs to the complex I subunit 1 family. Core subunit of respiratory chain NADH dehydrogenase (Complex I) which is composed of 45 different subunits.

The protein localises to the mitochondrion inner membrane. The catalysed reaction is a ubiquinone + NADH + 5 H(+)(in) = a ubiquinol + NAD(+) + 4 H(+)(out). Core subunit of the mitochondrial membrane respiratory chain NADH dehydrogenase (Complex I) which catalyzes electron transfer from NADH through the respiratory chain, using ubiquinone as an electron acceptor. Essential for the catalytic activity and assembly of complex I. The protein is NADH-ubiquinone oxidoreductase chain 1 (MT-ND1) of Cnephaeus nilssonii (Northern bat).